The sequence spans 194 residues: Putative manganese efflux pump MntP (194 aa).

The next 6 helical transmembrane spans lie at 3–23 (PITT…AAIG), 37–57 (LYVA…GWLL), 65–85 (IATF…IHMI), 112–132 (LAAT…SMAF), 137–157 (IGIV…FGVM), and 170–190 (AEIV…YEHL).

It belongs to the MntP (TC 9.B.29) family.

The protein resides in the cell inner membrane. In terms of biological role, probably functions as a manganese efflux pump. The protein is Putative manganese efflux pump MntP of Xylella fastidiosa (strain M23).